The sequence spans 271 residues: Interleukin-1 alpha (271 aa).

Residues Met1–Arg112 constitute a propeptide that is removed on maturation. Position 82 is an N6-acetyllysine (Lys82). The segment at Lys82–Leu86 is nuclear localization signal (NLS). Ser87 carries the post-translational modification Phosphoserine. Asn102, Asn121, Asn137, Asn141, and Asn211 each carry an N-linked (GlcNAc...) asparagine glycan.

It belongs to the IL-1 family. In terms of assembly, monomer. Interacts with TMED10; the interaction mediates the translocation from the cytoplasm into the ERGIC (endoplasmic reticulum-Golgi intermediate compartment) and thereby secretion. Interacts with IL1R1. Interacts with S100A13; this interaction is the first step in the export of IL1A, followed by direct translocation of this complex across the plasma membrane. Post-translationally, acetylated within its nuclear localization sequence, which impacts subcellular localization. Proteolytic processed by CAPN1 in a calcium-dependent manner. Cleavage from 31 kDa precursor to 18 kDa biologically active molecules. In terms of processing, phosphorylated. Phosphorylation greatly enhances susceptibility to digestion and promotes the conversion of pre-IL1A alpha to the biologically active IL1A.

It localises to the nucleus. The protein localises to the cytoplasm. It is found in the secreted. Its function is as follows. Cytokine constitutively present intracellularly in nearly all resting non-hematopoietic cells that plays an important role in inflammation and bridges the innate and adaptive immune systems. After binding to its receptor IL1R1 together with its accessory protein IL1RAP, forms the high affinity interleukin-1 receptor complex. Signaling involves the recruitment of adapter molecules such as MYD88, IRAK1 or IRAK4. In turn, mediates the activation of NF-kappa-B and the three MAPK pathways p38, p42/p44 and JNK pathways. Within the cell, acts as an alarmin and cell death results in its liberation in the extracellular space after disruption of the cell membrane to induce inflammation and alert the host to injury or damage. In addition to its role as a danger signal, which occurs when the cytokine is passively released by cell necrosis, directly senses DNA damage and acts as signal for genotoxic stress without loss of cell integrity. The polypeptide is Interleukin-1 alpha (IL1A) (Macaca mulatta (Rhesus macaque)).